A 479-amino-acid polypeptide reads, in one-letter code: Aspartyl/glutamyl-tRNA(Asn/Gln) amidotransferase subunit B (479 aa).

It belongs to the GatB/GatE family. GatB subfamily. Heterotrimer of A, B and C subunits.

The catalysed reaction is L-glutamyl-tRNA(Gln) + L-glutamine + ATP + H2O = L-glutaminyl-tRNA(Gln) + L-glutamate + ADP + phosphate + H(+). The enzyme catalyses L-aspartyl-tRNA(Asn) + L-glutamine + ATP + H2O = L-asparaginyl-tRNA(Asn) + L-glutamate + ADP + phosphate + 2 H(+). Its function is as follows. Allows the formation of correctly charged Asn-tRNA(Asn) or Gln-tRNA(Gln) through the transamidation of misacylated Asp-tRNA(Asn) or Glu-tRNA(Gln) in organisms which lack either or both of asparaginyl-tRNA or glutaminyl-tRNA synthetases. The reaction takes place in the presence of glutamine and ATP through an activated phospho-Asp-tRNA(Asn) or phospho-Glu-tRNA(Gln). This chain is Aspartyl/glutamyl-tRNA(Asn/Gln) amidotransferase subunit B, found in Geobacter sulfurreducens (strain ATCC 51573 / DSM 12127 / PCA).